Consider the following 563-residue polypeptide: MTDNKSIITSLSQVLPDIPVAEIAAKLESPKSSDLGDVAFPTFTLAKLLRQAPQQIASDIVNRIDQSNFEKVVATGPYVNFFLDKKMTSQATLKTILTQGAAFGDNNDGDGANVTIDMSSPNIAKPMSMGHLRSTVIGNALANITAKNGYHPIKINHLGDWGTQFGKLIYAYKTWGTEAEVKADPIATLLRYYVEFHEKAKIDDSLNDAGRAWFKKLEDGDEEAHQLWTWFRAESLKEFTEIYDRLEISFDSFNGEAFYNDKMDKVVDMLAEKSLLVESQGAQIVDLSDINPNLTPAMIKRTDGATLYMTRDLAAAVYRKETYNFAKSLYVVGGEQREHFVQMKAVLSLMGFDWADDVEHIAFGLITFNGKKMSTRKGDVVLLKDVLNDAHDLALKQIQEKNPDLADKATVAEQVGAGAVVFHDLMNDRTNNFDFNLEEVVRFEGDTGPYVQYTNARAKSILRKANTAVSVDELNLDDTATWDIITTLNQFPTIVQRAWQQREASIIAKYALSLSRAFNKYYANSKILLPDDQLNARLALVKAVTIILSESLRLLGVKAPEEM.

The 'HIGH' region motif lies at 121-131 (PNIAKPMSMGH).

This sequence belongs to the class-I aminoacyl-tRNA synthetase family. In terms of assembly, monomer.

It localises to the cytoplasm. It carries out the reaction tRNA(Arg) + L-arginine + ATP = L-arginyl-tRNA(Arg) + AMP + diphosphate. This chain is Arginine--tRNA ligase, found in Leuconostoc citreum (strain KM20).